We begin with the raw amino-acid sequence, 993 residues long: Isoleucine--tRNA ligase, mitochondrial (993 aa).

Residues 1–29 (SLWGTPRLPCSPGWQGATKRLLVRSVSGA) constitute a mitochondrion transit peptide. Lys55 is modified (N6-acetyllysine; alternate). Lys55 carries the N6-succinyllysine; alternate modification. The 'HIGH' region signature appears at 97-107 (PYANGDPHVGH). Residue Lys170 is modified to N6-acetyllysine. Lys175 carries the post-translational modification N6-succinyllysine. Lys214 carries the post-translational modification N6-acetyllysine. Position 222 is an N6-acetyllysine; alternate (Lys222). Lys222 is modified (N6-succinyllysine; alternate). An N6-succinyllysine mark is found at Lys460 and Lys481. 2 residues coordinate ATP: Lys645 and Lys648. Residues 645 to 649 (KMSKS) carry the 'KMSKS' region motif. Lys706 is modified (N6-acetyllysine). Lys756 and Lys762 each carry N6-acetyllysine; alternate. Residues Lys756 and Lys762 each carry the N6-succinyllysine; alternate modification.

The protein belongs to the class-I aminoacyl-tRNA synthetase family.

The protein localises to the mitochondrion matrix. It catalyses the reaction tRNA(Ile) + L-isoleucine + ATP = L-isoleucyl-tRNA(Ile) + AMP + diphosphate. Functionally, aminoacyl-tRNA synthetase that catalyzes the specific attachment of isoleucine to its cognate tRNA (tRNA(Ile)). In Macaca fascicularis (Crab-eating macaque), this protein is Isoleucine--tRNA ligase, mitochondrial (IARS2).